The sequence spans 64 residues: Translation machinery-associated protein 7 homolog (64 aa).

Residues 1 to 64 (MSGRQGGKAK…GGGIKKSGKK (64 aa)) are disordered. The stretch at 21–50 (DLSEEDVEFKKKQQEEAKKIKEMAAKAGQR) forms a coiled coil. Residues 28–44 (EFKKKQQEEAKKIKEMA) show a composition bias toward basic and acidic residues. Residues 53 to 64 (LLGGGIKKSGKK) show a composition bias toward gly residues.

This sequence belongs to the TMA7 family.

In Caenorhabditis elegans, this protein is Translation machinery-associated protein 7 homolog.